Consider the following 253-residue polypeptide: uncharacterized protein (253 aa).

This is an uncharacterized protein from Caenorhabditis elegans.